The primary structure comprises 182 residues: ADP-ribosylation factor-like protein 3 (182 aa).

Glycine 2 is lipidated: N-myristoyl glycine. At serine 5 the chain carries Phosphoserine. Residues 24-31 (GLDNAGKT), threonine 48, 67-71 (DIGGQ), glycine 70, 126-129 (NKQD), and 159-161 (SAL) each bind GTP. Residues threonine 31 and threonine 48 each contribute to the Mg(2+) site.

The protein belongs to the small GTPase superfamily. Arf family. Found in a complex with ARL3, RP2 and UNC119 (or UNC119B); RP2 induces hydrolysis of GTP ARL3 in the complex, leading to the release of UNC119 (or UNC119B). Interacts with RP2; interaction is direct and stimulated with the activated GTP-bound form of ARL3. Interacts with SYS1. The GTP-bound form interacts with ARL2BP and PDE6D. Microtubule-associated protein. May interact with GOLGA4. Interacts with GGA1; the interaction recruits PKD1:PKD2 complex to trans-Golgi network and is required for ciliary targeting of PKD1:PKD2 complex. Interacts with DNAAF9. As to expression, expressed in the retina. Strongly expressed in connecting cilium, the myoid region of the inner segments (IS) and in cone photoreceptors (at protein level).

The protein resides in the golgi apparatus membrane. It is found in the cytoplasm. Its subcellular location is the cytoskeleton. It localises to the spindle. The protein localises to the nucleus. The protein resides in the microtubule organizing center. It is found in the centrosome. Its subcellular location is the cell projection. It localises to the cilium. Functionally, small GTP-binding protein which cycles between an inactive GDP-bound and an active GTP-bound form, and the rate of cycling is regulated by guanine nucleotide exchange factors (GEF) and GTPase-activating proteins (GAP). Required for normal cytokinesis and cilia signaling. Requires assistance from GTPase-activating proteins (GAPs) like RP2 and PDE6D, in order to cycle between inactive GDP-bound and active GTP-bound forms. Required for targeting proteins to the cilium, including myristoylated NPHP3 and prenylated INPP5E. Targets NPHP3 to the ciliary membrane by releasing myristoylated NPHP3 from UNC119B cargo adapter into the cilium. Required for PKD1:PKD2 complex targeting from the trans-Golgi network to the cilium. The polypeptide is ADP-ribosylation factor-like protein 3 (ARL3) (Homo sapiens (Human)).